We begin with the raw amino-acid sequence, 510 residues long: Protein HGV2 (510 aa).

The disordered stretch occupies residues 95 to 227; it reads GVPEEDADGD…KENESEEDPD (133 aa). A compositionally biased stretch (acidic residues) spans 98–110; sequence EEDADGDSDQEQE. Composition is skewed to basic and acidic residues over residues 111-129 and 142-199; these read QFEK…REEV and EERG…DKPV. Over residues 204 to 217 the composition is skewed to low complexity; that stretch reads TEEPGTSGTSASSS. TPR repeat units follow at residues 260 to 293 and 302 to 335; these read AQCH…QKDL and AETY…LEAR. The tract at residues 391–510 is disordered; that stretch reads DGSPFRQASE…TPKKDAAKRR (120 aa). Residues 398-411 show a composition bias toward low complexity; the sequence is ASEGESSSGLGAST. 2 consecutive short sequence motifs (nuclear localization signal) follow at residues 444–451 and 465–471; these read VRRKRPSP and SKKAKQE. Residues 459–471 show a composition bias toward basic and acidic residues; that stretch reads ESKENESKKAKQE.

This sequence belongs to the NASP family. As to expression, embryo and larvae.

The protein localises to the nucleus. May function as a nucleosome assembly factor during rapid embryonic cell divisions. This Halocynthia roretzi (Sea squirt) protein is Protein HGV2 (HGV2).